The sequence spans 165 residues: Interferon gamma (165 aa).

Positions 1–23 (MKYTSYILAFQLCIVLGSLGCYC) are cleaved as a signal peptide. Pyrrolidone carboxylic acid is present on Q24. N48 and N120 each carry an N-linked (GlcNAc...) asparagine glycan.

It belongs to the type II (or gamma) interferon family. Homodimer. Interacts with IFNGR1 (via extracellular domain); this interaction promotes IFNGR1 dimerization. Released primarily from activated T lymphocytes.

It is found in the secreted. Functionally, type II interferon produced by immune cells such as T-cells and NK cells that plays crucial roles in antimicrobial, antiviral, and antitumor responses by activating effector immune cells and enhancing antigen presentation. Primarily signals through the JAK-STAT pathway after interaction with its receptor IFNGR1 to affect gene regulation. Upon IFNG binding, IFNGR1 intracellular domain opens out to allow association of downstream signaling components JAK2, JAK1 and STAT1, leading to STAT1 activation, nuclear translocation and transcription of IFNG-regulated genes. Many of the induced genes are transcription factors such as IRF1 that are able to further drive regulation of a next wave of transcription. Plays a role in class I antigen presentation pathway by inducing a replacement of catalytic proteasome subunits with immunoproteasome subunits. In turn, increases the quantity, quality, and repertoire of peptides for class I MHC loading. Increases the efficiency of peptide generation also by inducing the expression of activator PA28 that associates with the proteasome and alters its proteolytic cleavage preference. Up-regulates as well MHC II complexes on the cell surface by promoting expression of several key molecules such as cathepsins B/CTSB, H/CTSH, and L/CTSL. Participates in the regulation of hematopoietic stem cells during development and under homeostatic conditions by affecting their development, quiescence, and differentiation. The chain is Interferon gamma (IFNG) from Cercocebus atys (Sooty mangabey).